The chain runs to 525 residues: Keratin, type II cytoskeletal 4 (525 aa).

Residues 1 to 145 form a head region; the sequence is MIARQSSVRG…DPEIQKIRTA (145 aa). Arginine 13 is modified (omega-N-methylarginine). Residues 146–181 are coil 1A; the sequence is EREQIKTLNNKFASFIDKVRFLEQQNKVLETKWNLL. The 314-residue stretch at 146-459 folds into the IF rod domain; that stretch reads EREQIKTLNN…KLLEGEECRM (314 aa). Positions 182-200 are linker 1; the sequence is QQQTTTTSPKSLDPFFETY. The tract at residues 201–292 is coil 1B; the sequence is INALRKNLDT…VLYEAELAQM (92 aa). Positions 293–316 are linker 12; the sequence is QTHVSDTSVVLSMDNNRNLDLDGI. The tract at residues 317–455 is coil 2; sequence IAEVRAQYED…ATYRKLLEGE (139 aa). The tail stretch occupies residues 456–524; sequence ECRMSGECKS…SSATITKRSP (69 aa).

It belongs to the intermediate filament family. Heterotetramer of two type I and two type II keratins. Keratin-4 is generally associated with keratin-13. As to expression, expressed in the dorsal and ventral epithelium of the tongue. Highest expression levels are detected in the suprabasal layer with low levels detected in the basal cell layer. Within the suprabasal layer expression is highest in the spinous cells, decreases in the granular cells and is not detected in the stratum corneum.

The sequence is that of Keratin, type II cytoskeletal 4 (Krt4) from Mus musculus (Mouse).